Consider the following 83-residue polypeptide: Small ribosomal subunit protein bS20 (83 aa).

Belongs to the bacterial ribosomal protein bS20 family.

Functionally, binds directly to 16S ribosomal RNA. The protein is Small ribosomal subunit protein bS20 of Leuconostoc mesenteroides subsp. mesenteroides (strain ATCC 8293 / DSM 20343 / BCRC 11652 / CCM 1803 / JCM 6124 / NCDO 523 / NBRC 100496 / NCIMB 8023 / NCTC 12954 / NRRL B-1118 / 37Y).